Consider the following 1371-residue polypeptide: Serine protease pic autotransporter (1371 aa).

Residues 1 to 55 form the signal peptide; sequence MNKVYSLKYCPVTGGLIVVSELASRVIKKTCRRLTHILLAGIPAVYLYYPQISQA. A Peptidase S6 domain is found at 56–301; the sequence is GIVRSDIAYQ…NVIPTDYLNQ (246 aa). Residues His127, Asp155, and Ser258 each act as charge relay system in the active site. Residues 1105-1371 enclose the Autotransporter domain; it reads DTNGDAGAWA…AVNANFRYMF (267 aa).

Cleaved to release the mature protein from the outer membrane.

The protein resides in the periplasm. The protein localises to the secreted. It is found in the cell surface. Its subcellular location is the cell outer membrane. Functionally, involved in virulence of uropathogenic E.coli although it is not known how it contributes to it. Has no mucinase activity. In Escherichia coli O6:H1 (strain CFT073 / ATCC 700928 / UPEC), this protein is Serine protease pic autotransporter (pic).